A 396-amino-acid chain; its full sequence is S-adenosylmethionine synthase (396 aa).

His-16 is a binding site for ATP. A Mg(2+)-binding site is contributed by Asp-18. Residue Glu-44 coordinates K(+). 2 residues coordinate L-methionine: Glu-57 and Gln-100. The interval Gln-100 to Arg-110 is flexible loop. ATP contacts are provided by residues Asp-165 to Lys-167, Asp-240, Arg-246 to Lys-247, Ala-263, and Lys-267. Asp-240 serves as a coordination point for L-methionine. Lys-271 contacts L-methionine.

The protein belongs to the AdoMet synthase family. As to quaternary structure, homotetramer; dimer of dimers. It depends on Mg(2+) as a cofactor. The cofactor is K(+).

The protein localises to the cytoplasm. The enzyme catalyses L-methionine + ATP + H2O = S-adenosyl-L-methionine + phosphate + diphosphate. It functions in the pathway amino-acid biosynthesis; S-adenosyl-L-methionine biosynthesis; S-adenosyl-L-methionine from L-methionine: step 1/1. In terms of biological role, catalyzes the formation of S-adenosylmethionine (AdoMet) from methionine and ATP. The overall synthetic reaction is composed of two sequential steps, AdoMet formation and the subsequent tripolyphosphate hydrolysis which occurs prior to release of AdoMet from the enzyme. The sequence is that of S-adenosylmethionine synthase from Pseudomonas fluorescens (strain ATCC BAA-477 / NRRL B-23932 / Pf-5).